The primary structure comprises 925 residues: Serine/threonine-protein phosphatase 1 regulatory subunit 10 (925 aa).

The interaction with TOX4 stretch occupies residues 1–348; the sequence is MGSGPIDPKE…EPAPPSEAMD (348 aa). Positions 73 to 147 constitute a TFIIS N-terminal domain; it reads KLLNNWLTYS…SDWMAVIRSQ (75 aa). The tract at residues 147-211 is disordered; that stretch reads QSSTQPAEKD…APSHAKFRST (65 aa). Composition is skewed to basic and acidic residues over residues 153-166 and 174-196; these read AEKDKKKRKEEGKS and PLTEVKAETRAEEAPEKKREKPK. Glycyl lysine isopeptide (Lys-Gly) (interchain with G-Cter in SUMO2) cross-links involve residues Lys179 and Lys262. Disordered stretches follow at residues 304-398, 536-555, and 587-890; these read KIKK…KRKT, TLEPGGAGGSPDGAGGSKLP, and SIMG…HGGD. Residue Ser313 is modified to Phosphoserine. A compositionally biased stretch (low complexity) spans 325–336; sequence KTSTEPSTAKPS. Residues 357–433 form a necessary for interaction with PPP1CA region; that stretch reads PPVEVPELMD…NKIKDFGEAA (77 aa). Position 382 is a phosphoserine (Ser382). The interval 393 to 408 is necessary for interaction with PPP1CC; that stretch reads GRKRKTVTWPEEGKLR. Residues 394 to 423 carry the PP1-binding motif motif; sequence RKRKTVTWPEEGKLREYFYFELDETERVNV. At Thr398 the chain carries Phosphothreonine; by PKA. The interaction with WDR82 stretch occupies residues 418–619; the sequence is TERVNVNKIK…IKQMLVPHGL (202 aa). Residues 540–551 are compositionally biased toward gly residues; the sequence is GGAGGSPDGAGG. Residues Ser545 and Ser591 each carry the phosphoserine modification. A compositionally biased stretch (basic and acidic residues) spans 596-611; the sequence is PSEELLKQPDYSDKIK. A compositionally biased stretch (pro residues) spans 644 to 655; it reads PPGPGGPMPGPH. Residues 656 to 665 are compositionally biased toward gly residues; the sequence is GGPGGPGGPV. At Arg668 the chain carries Omega-N-methylarginine. A compositionally biased stretch (low complexity) spans 679-693; sequence GDPFWDGPGDPMRGG. Arg696 and Arg741 each carry omega-N-methylarginine. Gly residues-rich tracts occupy residues 728 to 766 and 775 to 829; these read ARGGRSGGGPPNGRGGPGGGMVGGGGHRPHEGPGGGMSS and GPGG…AGGG. 2 stretches are compositionally biased toward basic and acidic residues: residues 846 to 871 and 879 to 890; these read PHDVPGHRGHDHRGPPPHEHRGHDGP and RGHDGGHNHGGD. The C3H1-type zinc-finger motif lies at 891-919; the sequence is MSKRPVCRHFMMKGNCRYENNCAFYHPGV.

Component of the PNUTS-PP1 complex (also named PTW/PP1 complex), composed of PPP1R10/PNUTS, TOX4, WDR82, and PPP1CA (or PPP1CB or PPP1CC). In terms of processing, phosphorylated on Ser-398 by PKA within the region necessary for interaction with PPP1CA.

It is found in the nucleus. The protein localises to the chromosome. Functionally, substrate-recognition component of the PNUTS-PP1 protein phosphatase complex, a protein phosphatase 1 (PP1) complex that promotes RNA polymerase II transcription pause-release, allowing transcription elongation. Promoter-proximal pausing by RNA polymerase II is a transcription halt following transcription initiation but prior to elongation, which acts as a checkpoint to control that transcripts are favorably configured for transcriptional elongation. The PNUTS-PP1 complex mediates the release of RNA polymerase II from promoter-proximal region of genes by catalyzing dephosphorylation of proteins involved in transcription, such as AFF4, CDK9, MEPCE, INTS12, NCBP1, POLR2M/GDOWN1 and SUPT6H. The PNUTS-PP1 complex also regulates RNA polymerase II transcription termination by mediating dephosphorylation of SUPT5H in termination zones downstream of poly(A) sites, thereby promoting deceleration of RNA polymerase II transcription. PNUTS-PP1 complex is also involved in the response to replication stress by mediating dephosphorylation of POLR2A at 'Ser-5' of the CTD, promoting RNA polymerase II degradation. The PNUTS-PP1 complex also plays a role in the control of chromatin structure and cell cycle progression during the transition from mitosis into interphase. PNUTS-PP1 complex mediates dephosphorylation of MYC, promoting MYC stability by preventing MYC ubiquitination by the SCF(FBXW7) complex. In addition to acts as a substrate-recognition component, PPP1R10/PNUTS also acts as a nuclear targeting subunit for the PNUTS-PP1 complex. In some context, PPP1R10/PNUTS also acts as an inhibitor of protein phosphatase 1 (PP1) activity by preventing access to substrates, such as RB. The polypeptide is Serine/threonine-protein phosphatase 1 regulatory subunit 10 (PPP1R10) (Sus scrofa (Pig)).